The following is a 343-amino-acid chain: D-alanine--D-alanine ligase (343 aa).

In terms of domain architecture, ATP-grasp spans 129-335 (KYVLEHFNIK…YSKLIDELIE (207 aa)). 162-217 (ENKLGYAVFIKPSNSGSSVGITKAHNRKELEAGLEEAMKYDRKILVEEALNAREIE) is a binding site for ATP. Mg(2+) is bound by residues aspartate 288, glutamate 302, and asparagine 304.

Belongs to the D-alanine--D-alanine ligase family. The cofactor is Mg(2+). Mn(2+) is required as a cofactor.

It localises to the cytoplasm. The catalysed reaction is 2 D-alanine + ATP = D-alanyl-D-alanine + ADP + phosphate + H(+). The protein operates within cell wall biogenesis; peptidoglycan biosynthesis. In terms of biological role, cell wall formation. This chain is D-alanine--D-alanine ligase, found in Clostridium acetobutylicum (strain ATCC 824 / DSM 792 / JCM 1419 / IAM 19013 / LMG 5710 / NBRC 13948 / NRRL B-527 / VKM B-1787 / 2291 / W).